The following is a 235-amino-acid chain: Probable ribonuclease P protein subunit 3 (235 aa).

This sequence belongs to the eukaryotic/archaeal RNase P protein component 3 family.

The protein resides in the nucleus. The catalysed reaction is Endonucleolytic cleavage of RNA, removing 5'-extranucleotides from tRNA precursor.. In terms of biological role, part of ribonuclease P, a protein complex that generates mature tRNA molecules by cleaving their 5'-ends. This Schizosaccharomyces pombe (strain 972 / ATCC 24843) (Fission yeast) protein is Probable ribonuclease P protein subunit 3.